A 395-amino-acid chain; its full sequence is Proteinase-activated receptor 4 (395 aa).

The N-terminal stretch at 1–16 (MCWPLLYPLMLGFSIS) is a signal peptide. A propeptide spans 17-58 (PAECQTPSIYDDVESTREGQEASLRPTVELNESKSPDKPNPR) (removed for receptor activation). Positions 46 to 66 (LNESKSPDKPNPRGFPGKPCA) are disordered. Residues 47–56 (NESKSPDKPN) are compositionally biased toward basic and acidic residues. The Extracellular portion of the chain corresponds to 59–93 (GFPGKPCANNSDTLELPASSEALLLGWVPTRLVPA). Asn67 is a glycosylation site (N-linked (GlcNAc...) asparagine). A helical membrane pass occupies residues 94–114 (IYGLVVVVGLPANGLALWVLA). The Cytoplasmic segment spans residues 115 to 119 (TRVPR). The helical transmembrane segment at 120–140 (LPSTILLMNLAVADLLLALVL) threads the bilayer. Residues 141–161 (PPRLVYHLRGQRWPFGEAACR) are Extracellular-facing. A disulfide bridge connects residues Cys160 and Cys239. The chain crosses the membrane as a helical span at residues 162-182 (VATAALYGHMYGSVLLLAAVS). The Cytoplasmic segment spans residues 183–203 (LDRYLALVHSLRARALRGQRL). The chain crosses the membrane as a helical span at residues 204–224 (TTILCLVAWLSAATLVLPLTF). The Extracellular segment spans residues 225–254 (HRQTFLLAGSDRMLCHDALPLAEQTSHWRP). The helical transmembrane segment at 255-275 (AFICLAVLGCFVPLLAMVLCY) threads the bilayer. Residues 276–295 (GATLRALAANGQRYSHAVRL) lie on the Cytoplasmic side of the membrane. The chain crosses the membrane as a helical span at residues 296–316 (TALVLFSAVAAFTPSNVLLVL). At 317 to 330 (HYSNPSPEAWGNLY) the chain is on the extracellular side. The helical transmembrane segment at 331 to 354 (GAYVPSLALSTLNSCVDPFIYYYV) threads the bilayer. Residues 355–395 (SHEFREKVRAMLCRQLKASSSSQASREAGSRGTAICSSTLL) lie on the Cytoplasmic side of the membrane.

The protein belongs to the G-protein coupled receptor 1 family. A proteolytic cleavage generates a new N-terminus that functions as a tethered ligand.

It localises to the cell membrane. In terms of biological role, receptor for activated thrombin or trypsin coupled to G proteins that stimulate phosphoinositide hydrolysis. May play a role in platelets activation. This Rattus norvegicus (Rat) protein is Proteinase-activated receptor 4 (F2rl3).